The sequence spans 198 residues: Dual specificity protein phosphatase 1 (198 aa).

The segment at 1 to 20 is disordered; the sequence is MSSRDRGSPSSSSSSSSLPG. Positions 8–17 are enriched in low complexity; it reads SPSSSSSSSS. Residues 26 to 47 are caM binding domain 1; sequence EKVKNQIQALVRVIKVARTYRD. Residues 50 to 191 form the Tyrosine-protein phosphatase domain; it reads VPSLIEQGLY…LQDLEKSMQV (142 aa). Cysteine 135 (phosphocysteine intermediate) is an active-site residue. The segment at 151–180 is caM binding domain 2; it reads MKKHGMTLAQALQHVKSKRPVASPNAGFIR.

Belongs to the protein-tyrosine phosphatase family. Non-receptor class dual specificity subfamily. As to quaternary structure, interacts with calmodulin (CaM) in a calcium Ca(2+)-dependent manner. Expressed in roots, stems, leaves and flowers.

Its subcellular location is the nucleus. The protein localises to the cytoplasm. The enzyme catalyses O-phospho-L-tyrosyl-[protein] + H2O = L-tyrosyl-[protein] + phosphate. It catalyses the reaction O-phospho-L-seryl-[protein] + H2O = L-seryl-[protein] + phosphate. It carries out the reaction O-phospho-L-threonyl-[protein] + H2O = L-threonyl-[protein] + phosphate. Inhibited by sodium vanadate and sodium tungstate. NaF and spermifine repress specifically phosphoserine and phosphothreonine phosphatase activity. In terms of biological role, has a dual specificity toward Ser/Thr and Tyr-containing proteins. Dephosphorylates MPK4 in vitro. This chain is Dual specificity protein phosphatase 1 (DSPTP1), found in Arabidopsis thaliana (Mouse-ear cress).